Reading from the N-terminus, the 396-residue chain is Bone morphogenetic protein 2 (396 aa).

Positions Met-1 to Gly-23 are cleaved as a signal peptide. Positions Leu-24–Arg-282 are cleaved as a propeptide — cleaved by PCSK5. Ser-87 is subject to Phosphoserine. Residues Asn-135, Asn-163, Asn-164, and Asn-200 are each glycosylated (N-linked (GlcNAc...) asparagine). The disordered stretch occupies residues Lys-272–Lys-293. The segment covering His-274–Lys-293 has biased composition (basic residues). 3 disulfides stabilise this stretch: Cys-296–Cys-361, Cys-325–Cys-393, and Cys-329–Cys-395. N-linked (GlcNAc...) asparagine glycosylation is present at Asn-338.

This sequence belongs to the TGF-beta family. As to quaternary structure, homodimer; disulfide-linked. Interacts with SOSTDC1. Interacts with GREM2, RGMA, RGMB and RGMC. Interacts with ASPN. Interacts with MAFP5. Interacts with FBN1 (via N-terminal domain) and FBN2. Interacts with type I receptor BMPR1A. Interacts with type II receptor BMPR2. Interacts with ERFE. Interacts with BMPR1A/ALK3; the interaction may induce HAMP expression. Interacts with TGFBR3.

The protein resides in the secreted. In terms of biological role, growth factor of the TGF-beta superfamily that plays essential roles in many developmental processes, including cardiogenesis, neurogenesis, and osteogenesis. Induces cartilage and bone formation. Initiates the canonical BMP signaling cascade by associating with type I receptor BMPR1A and type II receptor BMPR2. Once all three components are bound together in a complex at the cell surface, BMPR2 phosphorylates and activates BMPR1A. In turn, BMPR1A propagates signal by phosphorylating SMAD1/5/8 that travel to the nucleus and act as activators and repressors of transcription of target genes. Also acts to promote expression of HAMP, via the interaction with its receptor BMPR1A/ALK3. Can also signal through non-canonical pathways such as ERK/MAP kinase signaling cascade that regulates osteoblast differentiation. Also stimulates the differentiation of myoblasts into osteoblasts via the EIF2AK3-EIF2A-ATF4 pathway by stimulating EIF2A phosphorylation which leads to increased expression of ATF4 which plays a central role in osteoblast differentiation. Acts as a positive regulator of odontoblast differentiation during mesenchymal tooth germ formation, expression is repressed during the bell stage by MSX1-mediated inhibition of CTNNB1 signaling. This chain is Bone morphogenetic protein 2 (BMP2), found in Dama dama (Fallow deer).